Here is a 123-residue protein sequence, read N- to C-terminus: SGSCEVKTCWWAQPDFRAIGDYLKDKYDSASEMVVEKHRESRGWVETLRAKYALFKPPTERDLVYYENSPNFCEPNPETGSFGTRDRMCNVTSHGIDGCDLLCCGRGHNTRTEKRKEKCHCIL.

A lipid anchor (O-palmitoleoyl serine) is attached at serine 1. A disulfide bond links cysteine 89 and cysteine 104. N-linked (GlcNAc...) asparagine glycosylation is present at asparagine 90.

It belongs to the Wnt family. In terms of processing, disulfide bonds have critical and distinct roles in secretion and activity. Loss of each conserved cysteine results in high molecular weight oxidized Wnt oligomers, which are formed through inter-Wnt disulfide bonding. Post-translationally, palmitoleoylation is required for efficient binding to frizzled receptors. Depalmitoleoylation leads to Wnt signaling pathway inhibition.

Its subcellular location is the secreted. It is found in the extracellular space. The protein localises to the extracellular matrix. In terms of biological role, ligand for members of the frizzled family of seven transmembrane receptors. Functions in the canonical Wnt signaling pathway that results in activation of transcription factors of the TCF/LEF family. Required for normal embryonic mesoderm development and formation of caudal somites. Required for normal morphogenesis of the developing neural tube. The chain is Protein Wnt-3a (WNT-3A) from Pituophis melanoleucus (Pine snake).